Here is a 133-residue protein sequence, read N- to C-terminus: Small ribosomal subunit protein uS8 (133 aa).

Belongs to the universal ribosomal protein uS8 family. In terms of assembly, part of the 30S ribosomal subunit. Contacts proteins S5 and S12.

Its function is as follows. One of the primary rRNA binding proteins, it binds directly to 16S rRNA central domain where it helps coordinate assembly of the platform of the 30S subunit. The chain is Small ribosomal subunit protein uS8 from Deinococcus radiodurans (strain ATCC 13939 / DSM 20539 / JCM 16871 / CCUG 27074 / LMG 4051 / NBRC 15346 / NCIMB 9279 / VKM B-1422 / R1).